A 263-amino-acid polypeptide reads, in one-letter code: Thymidylate synthase (263 aa).

DUMP-binding positions include Arg25 and 123–124 (RR). Cys143 (nucleophile) is an active-site residue. DUMP contacts are provided by residues 163–166 (RSGD), Asn174, and 204–206 (HIY). Asp166 lines the (6R)-5,10-methylene-5,6,7,8-tetrahydrofolate pocket. Ser262 serves as a coordination point for (6R)-5,10-methylene-5,6,7,8-tetrahydrofolate.

It belongs to the thymidylate synthase family. Bacterial-type ThyA subfamily. As to quaternary structure, homodimer.

Its subcellular location is the cytoplasm. It catalyses the reaction dUMP + (6R)-5,10-methylene-5,6,7,8-tetrahydrofolate = 7,8-dihydrofolate + dTMP. The protein operates within pyrimidine metabolism; dTTP biosynthesis. Catalyzes the reductive methylation of 2'-deoxyuridine-5'-monophosphate (dUMP) to 2'-deoxythymidine-5'-monophosphate (dTMP) while utilizing 5,10-methylenetetrahydrofolate (mTHF) as the methyl donor and reductant in the reaction, yielding dihydrofolate (DHF) as a by-product. This enzymatic reaction provides an intracellular de novo source of dTMP, an essential precursor for DNA biosynthesis. The sequence is that of Thymidylate synthase from Clostridium beijerinckii (strain ATCC 51743 / NCIMB 8052) (Clostridium acetobutylicum).